Reading from the N-terminus, the 37-residue chain is Neuropeptide Y1-like conopeptide (37 aa).

Phenylalanine amide is present on Phe-37.

The protein belongs to the NPY family. As to expression, expressed by the venom duct.

It localises to the secreted. Causes hyperactivity such as jumping, rapid circling and tail flicking, when intraventricularly injected into mice brain. The polypeptide is Neuropeptide Y1-like conopeptide (Conus betulinus (Beech cone)).